Reading from the N-terminus, the 511-residue chain is Limonoid UDP-glucosyltransferase (511 aa).

The active-site Proton acceptor is the His19. Residue His19 participates in an anthocyanidin binding. Residues Gln344, His359, Trp362, Asn363, Ser364, and Glu367 each coordinate UDP-alpha-D-glucose. Gly382 provides a ligand contact to an anthocyanidin. Asp383 and Gln384 together coordinate UDP-alpha-D-glucose.

Belongs to the UDP-glycosyltransferase family.

It catalyses the reaction limonin + UDP-alpha-D-glucose + H2O = limonin 17-beta-D-glucoside + UDP + 2 H(+). In terms of biological role, involved in the glucosylation of limonoids. In Citrus unshiu (Satsuma mandarin), this protein is Limonoid UDP-glucosyltransferase.